The primary structure comprises 874 residues: Alanine--tRNA ligase (874 aa).

Positions 562, 566, 665, and 669 each coordinate Zn(2+).

This sequence belongs to the class-II aminoacyl-tRNA synthetase family. Zn(2+) serves as cofactor.

The protein resides in the cytoplasm. It carries out the reaction tRNA(Ala) + L-alanine + ATP = L-alanyl-tRNA(Ala) + AMP + diphosphate. Functionally, catalyzes the attachment of alanine to tRNA(Ala) in a two-step reaction: alanine is first activated by ATP to form Ala-AMP and then transferred to the acceptor end of tRNA(Ala). Also edits incorrectly charged Ser-tRNA(Ala) and Gly-tRNA(Ala) via its editing domain. In Pseudomonas syringae pv. syringae (strain B728a), this protein is Alanine--tRNA ligase.